The chain runs to 490 residues: Protein nucleotidyltransferase YdiU (490 aa).

The ATP site is built by G89, G91, R92, K112, D124, G125, R175, and R182. The active-site Proton acceptor is the D251. Residues N252 and D261 each contribute to the Mg(2+) site. D261 is a binding site for ATP.

Belongs to the SELO family. It depends on Mg(2+) as a cofactor. Mn(2+) is required as a cofactor.

The catalysed reaction is L-seryl-[protein] + ATP = 3-O-(5'-adenylyl)-L-seryl-[protein] + diphosphate. It carries out the reaction L-threonyl-[protein] + ATP = 3-O-(5'-adenylyl)-L-threonyl-[protein] + diphosphate. The enzyme catalyses L-tyrosyl-[protein] + ATP = O-(5'-adenylyl)-L-tyrosyl-[protein] + diphosphate. It catalyses the reaction L-histidyl-[protein] + UTP = N(tele)-(5'-uridylyl)-L-histidyl-[protein] + diphosphate. The catalysed reaction is L-seryl-[protein] + UTP = O-(5'-uridylyl)-L-seryl-[protein] + diphosphate. It carries out the reaction L-tyrosyl-[protein] + UTP = O-(5'-uridylyl)-L-tyrosyl-[protein] + diphosphate. In terms of biological role, nucleotidyltransferase involved in the post-translational modification of proteins. It can catalyze the addition of adenosine monophosphate (AMP) or uridine monophosphate (UMP) to a protein, resulting in modifications known as AMPylation and UMPylation. In Vibrio vulnificus (strain CMCP6), this protein is Protein nucleotidyltransferase YdiU.